We begin with the raw amino-acid sequence, 143 residues long: Trypsin inhibitor CMc (143 aa).

The N-terminal stretch at 1 to 24 (MASCSQHLLSAVAIFSVLAGVATA) is a signal peptide.

Belongs to the protease inhibitor I6 (cereal trypsin/alpha-amylase inhibitor) family. In terms of tissue distribution, endosperm.

It is found in the secreted. Trypsin inhibitor. No alpha-amylase inhibition detected. The protein is Trypsin inhibitor CMc (ITR2) of Hordeum vulgare (Barley).